A 508-amino-acid polypeptide reads, in one-letter code: MMITIRPDEISSIIREQIEQYNNEIQVVNMGTVLQVGDGIARIHGLYEVMAGELVEFEDSTVGIALNLETQNVGVVLMGDGLTIKEGSFVKTTGKIAQIPVSDAFLGRIVNALAQPIDGRGPIPASEFRLIESPAPGIVSRRSVYEPLQTGLIAIDSMIPIGRGQRELIIGDRQTGKTAVATDTILNQKGQNVVCVYVAIGQKASSVAQVVNMLRERSAMEYTIVVVEPADSPATLQYLAPYTGTALAEYFMYKKKHTLIIYDDLSKQAQAYRQMSLLLRRPPGREAYPGDVFYLHSRLLERAAKLNSQLGEGSITALPIVETQAGDVSAYIPTNVISITDGQIFLSSDLFNAGIRPAINVGLSVSRVGSAAQIKAMKQVAGKLKLELAQTAELEAFAQFASDLDKGTQDQLARGQRLRESLKQPQSTPLTVEEQIATIFTGTNGYLDRFDIREVKKFLDQLREYLKKKKPQFGEIIRTTKIFTEEAEALLREAIKEQTELFVVQQKN.

Residue 171–178 (GDRQTGKT) coordinates ATP.

The protein belongs to the ATPase alpha/beta chains family. In terms of assembly, F-type ATPases have 2 components, CF(1) - the catalytic core - and CF(0) - the membrane proton channel. CF(1) has five subunits: alpha(3), beta(3), gamma(1), delta(1), epsilon(1). CF(0) has four main subunits: a, b, b' and c.

Its subcellular location is the plastid. The protein localises to the chloroplast thylakoid membrane. The catalysed reaction is ATP + H2O + 4 H(+)(in) = ADP + phosphate + 5 H(+)(out). Functionally, produces ATP from ADP in the presence of a proton gradient across the membrane. The alpha chain is a regulatory subunit. This Gnetum parvifolium (Small-leaved jointfir) protein is ATP synthase subunit alpha, chloroplastic.